A 248-amino-acid polypeptide reads, in one-letter code: Large ribosomal subunit protein uL4 (248 aa).

Residues 69 to 92 (HVPRLKNGSRAAKVPQAKGGREAH) form a disordered region.

It belongs to the universal ribosomal protein uL4 family. In terms of assembly, part of the 50S ribosomal subunit.

Functionally, one of the primary rRNA binding proteins, this protein initially binds near the 5'-end of the 23S rRNA. It is important during the early stages of 50S assembly. It makes multiple contacts with different domains of the 23S rRNA in the assembled 50S subunit and ribosome. In terms of biological role, forms part of the polypeptide exit tunnel. This Methanoregula boonei (strain DSM 21154 / JCM 14090 / 6A8) protein is Large ribosomal subunit protein uL4.